Here is a 146-residue protein sequence, read N- to C-terminus: UPF0742 protein C1348.03 (146 aa).

Residues 38–60 traverse the membrane as a helical segment; the sequence is LTVKYCLAVKLLIYLLYCWYIYS.

Belongs to the UPF0742 family.

It localises to the cytoplasm. The protein resides in the nucleus membrane. In Schizosaccharomyces pombe (strain 972 / ATCC 24843) (Fission yeast), this protein is UPF0742 protein C1348.03.